Consider the following 193-residue polypeptide: dCTP deaminase (193 aa).

DCTP-binding positions include 110 to 115 (RSSLAR), aspartate 128, 136 to 138 (VLE), tyrosine 171, lysine 178, and glutamine 182. Glutamate 138 acts as the Proton donor/acceptor in catalysis. Positions 169-193 (RPYNRRQDAKYRDQQGAVASRIDKD) are disordered.

This sequence belongs to the dCTP deaminase family. As to quaternary structure, homotrimer.

The catalysed reaction is dCTP + H2O + H(+) = dUTP + NH4(+). The protein operates within pyrimidine metabolism; dUMP biosynthesis; dUMP from dCTP (dUTP route): step 1/2. Its function is as follows. Catalyzes the deamination of dCTP to dUTP. The polypeptide is dCTP deaminase (Citrobacter koseri (strain ATCC BAA-895 / CDC 4225-83 / SGSC4696)).